A 334-amino-acid polypeptide reads, in one-letter code: Adenosine deaminase (334 aa).

Positions 12 and 14 each coordinate Zn(2+). Substrate-binding residues include His-14, Asp-16, and Gly-170. His-197 is a Zn(2+) binding site. Glu-200 serves as the catalytic Proton donor. Residue Asp-278 coordinates Zn(2+). Residue Asp-279 participates in substrate binding.

It belongs to the metallo-dependent hydrolases superfamily. Adenosine and AMP deaminases family. Adenosine deaminase subfamily. Zn(2+) is required as a cofactor.

It catalyses the reaction adenosine + H2O + H(+) = inosine + NH4(+). The catalysed reaction is 2'-deoxyadenosine + H2O + H(+) = 2'-deoxyinosine + NH4(+). Catalyzes the hydrolytic deamination of adenosine and 2-deoxyadenosine. The polypeptide is Adenosine deaminase (Vibrio cholerae serotype O1 (strain ATCC 39541 / Classical Ogawa 395 / O395)).